Consider the following 505-residue polypeptide: Lysine--tRNA ligase (505 aa).

Glu-415 and Glu-422 together coordinate Mg(2+).

The protein belongs to the class-II aminoacyl-tRNA synthetase family. As to quaternary structure, homodimer. Mg(2+) is required as a cofactor.

The protein resides in the cytoplasm. The enzyme catalyses tRNA(Lys) + L-lysine + ATP = L-lysyl-tRNA(Lys) + AMP + diphosphate. The polypeptide is Lysine--tRNA ligase (Yersinia pseudotuberculosis serotype O:1b (strain IP 31758)).